Reading from the N-terminus, the 288-residue chain is Pantothenate synthetase (288 aa).

An ATP-binding site is contributed by M30–H37. The active-site Proton donor is the H37. Q61 serves as a coordination point for (R)-pantoate. Beta-alanine is bound at residue Q61. G147–D150 contributes to the ATP binding site. Residue Q153 participates in (R)-pantoate binding. Residue K184–R187 participates in ATP binding.

The protein belongs to the pantothenate synthetase family. In terms of assembly, homodimer.

The protein resides in the cytoplasm. It carries out the reaction (R)-pantoate + beta-alanine + ATP = (R)-pantothenate + AMP + diphosphate + H(+). The protein operates within cofactor biosynthesis; (R)-pantothenate biosynthesis; (R)-pantothenate from (R)-pantoate and beta-alanine: step 1/1. Functionally, catalyzes the condensation of pantoate with beta-alanine in an ATP-dependent reaction via a pantoyl-adenylate intermediate. The sequence is that of Pantothenate synthetase from Bacillus licheniformis (strain ATCC 14580 / DSM 13 / JCM 2505 / CCUG 7422 / NBRC 12200 / NCIMB 9375 / NCTC 10341 / NRRL NRS-1264 / Gibson 46).